Here is a 127-residue protein sequence, read N- to C-terminus: UPF0325 protein VS_2356 (127 aa).

The protein belongs to the UPF0325 family.

The protein is UPF0325 protein VS_2356 of Vibrio atlanticus (strain LGP32) (Vibrio splendidus (strain Mel32)).